The following is a 1502-amino-acid chain: Rho GTPase-activating protein 5 (1502 aa).

FF domains lie at 267–325 (QLVV…HIEQ), 366–420 (KLME…HVQH), 427–481 (RVEM…HQRE), and 482–548 (IVEK…HIGF). Tyr550 is subject to 3'-nitrotyrosine. Ser590 and Ser765 each carry phosphoserine. Residues 590-763 (STNIDKVNLF…LESVKHNLDV (174 aa)) form the pG1 pseudoGTPase domain. A pG2 pseudoGTPase domain is found at 779 to 944 (RIVMCAMCGD…FSDVLEKKNM (166 aa)). Phosphoserine occurs at positions 951 and 968. Disordered stretches follow at residues 975–1004 (YNNY…LPTP), 1022–1050 (HSTP…PKTN), and 1069–1089 (NPRK…DPSD). Residues 1036-1045 (VPPPIKPKPV) are compositionally biased toward pro residues. Ser1115 bears the Phosphoserine mark. 2 disordered regions span residues 1125–1156 (FVNN…YKYK) and 1168–1254 (YRRT…TRRN). The segment covering 1140–1150 (RTSKSHGERRP) has biased composition (basic and acidic residues). Residues Ser1173, Ser1176, Ser1195, Ser1202, and Ser1218 each carry the phosphoserine modification. Residues 1262-1449 (MPLQDLVTAE…TFIQQCQFFF (188 aa)) enclose the Rho-GAP domain.

In terms of assembly, may interact with RASA1/p120GAP. Detected in skin fibroblasts (at protein level).

It localises to the cytoplasm. It is found in the cell membrane. In terms of biological role, GTPase-activating protein for Rho family members. This Homo sapiens (Human) protein is Rho GTPase-activating protein 5 (ARHGAP5).